The chain runs to 612 residues: Alpha-glycerophosphate oxidase (612 aa).

21–49 (DLLIIGGGITGAGVALQAAASGLDTGLIE) provides a ligand contact to FAD. Basic and acidic residues predominate over residues 398–408 (VETSTSEKELD). Positions 398-418 (VETSTSEKELDPSAVSRGSSF) are disordered.

The protein belongs to the FAD-dependent glycerol-3-phosphate dehydrogenase family. FAD is required as a cofactor.

It is found in the cytoplasm. The catalysed reaction is sn-glycerol 3-phosphate + O2 = dihydroxyacetone phosphate + H2O2. In Streptococcus pyogenes serotype M18 (strain MGAS8232), this protein is Alpha-glycerophosphate oxidase (glpO).